A 285-amino-acid chain; its full sequence is MEMO1 family protein Igni_0992 (285 aa).

The protein belongs to the MEMO1 family.

The protein is MEMO1 family protein Igni_0992 of Ignicoccus hospitalis (strain KIN4/I / DSM 18386 / JCM 14125).